The sequence spans 282 residues: Transcription factor HES-1 (282 aa).

Positions Met1 to Lys44 are disordered. Positions Ser10–Val21 are enriched in low complexity. Residues Asp26 to Arg35 are compositionally biased toward basic and acidic residues. The 58-residue stretch at His34–Leu91 folds into the bHLH domain. The 34-residue stretch at Tyr110–Leu143 folds into the Orange domain. 2 disordered regions span residues Gln158 to Pro204 and Thr256 to Asn282. Composition is skewed to pro residues over residues Gln164–Pro174 and Phe182–Ser202. The span at Ser264–Ser275 shows a compositional bias: low complexity. Residues Trp277 to Trp280 carry the WRPW motif motif.

Interacts with SIRT1. Transcription repression requires formation of a complex with a corepressor protein of the Groucho/TLE family. Interacts (via WPRW motif) with TLE1, and more weakly with TLE2. Interacts with HES6. Interacts with an FA complex, composed of FANCA, FANCF, FANCG and FANCL, but not of FANCC, nor FANCE. As to expression, expressed at high levels in undifferentiated neural precursor cells, but the level of expression decreases as neural differentiation proceeds.

The protein localises to the nucleus. Functionally, transcriptional repressor of genes that require a bHLH protein for their transcription. May act as a negative regulator of myogenesis by inhibiting the functions of MYOD1 and ASH1. Binds DNA on N-box motifs: 5'-CACNAG-3' with high affinity and on E-box motifs: 5'-CANNTG-3' with low affinity. May play a role in a functional FA core complex response to DNA cross-link damage, being required for the stability and nuclear localization of FA core complex proteins, as well as for FANCD2 monoubiquitination in response to DNA damage. The protein is Transcription factor HES-1 (Hes1) of Mus musculus (Mouse).